The sequence spans 942 residues: DNA mismatch repair protein MutS (942 aa).

613–620 (GPNMAGKS) serves as a coordination point for ATP.

Belongs to the DNA mismatch repair MutS family.

In terms of biological role, this protein is involved in the repair of mismatches in DNA. It is possible that it carries out the mismatch recognition step. This protein has a weak ATPase activity. The chain is DNA mismatch repair protein MutS from Clostridium botulinum (strain Eklund 17B / Type B).